We begin with the raw amino-acid sequence, 81 residues long: Acyl carrier protein (81 aa).

In terms of domain architecture, Carrier spans Ala-2 to Gln-80. Ser-40 is subject to O-(pantetheine 4'-phosphoryl)serine.

Belongs to the acyl carrier protein (ACP) family. 4'-phosphopantetheine is transferred from CoA to a specific serine of apo-ACP by AcpS. This modification is essential for activity because fatty acids are bound in thioester linkage to the sulfhydryl of the prosthetic group.

The protein localises to the cytoplasm. It participates in lipid metabolism; fatty acid biosynthesis. Functionally, carrier of the growing fatty acid chain in fatty acid biosynthesis. In Kineococcus radiotolerans (strain ATCC BAA-149 / DSM 14245 / SRS30216), this protein is Acyl carrier protein.